Here is a 249-residue protein sequence, read N- to C-terminus: Putative nicotinamide mononucleotide adenylyltransferase (249 aa).

NAD(+) contacts are provided by serine 40 and phenylalanine 41. Histidine 48 is a binding site for ATP. The NAD(+) site is built by threonine 97, glycine 129, aspartate 131, arginine 165, and asparagine 206. 214-217 (TRAR) contributes to the ATP binding site.

Belongs to the eukaryotic NMN adenylyltransferase family. POF1 subfamily.

It is found in the cytoplasm. The protein resides in the nucleus. It catalyses the reaction beta-nicotinamide D-ribonucleotide + ATP + H(+) = diphosphate + NAD(+). Its pathway is cofactor biosynthesis; NAD(+) biosynthesis; NAD(+) from nicotinamide D-ribonucleotide: step 1/1. Its function is as follows. Catalyzes the formation of NAD(+) from nicotinamide mononucleotide (NMN) and ATP. Involved in the salvage pathway for NAD(+) biosynthesis via NMN. This Schizosaccharomyces pombe (strain 972 / ATCC 24843) (Fission yeast) protein is Putative nicotinamide mononucleotide adenylyltransferase.